We begin with the raw amino-acid sequence, 954 residues long: E3 ubiquitin-protein ligase arkadia (954 aa).

The segment covering 50–66 (LCSDTNKQQRDLNSNGT) has biased composition (polar residues). Disordered stretches follow at residues 50–175 (LCSD…VSSL) and 193–276 (RKRF…SGGM). 2 stretches are compositionally biased toward low complexity: residues 112–131 (SSFS…GDSD) and 232–251 (SSSS…SSST). Residues 280 to 284 (VVVIE) carry the SUMO interaction motif 1 (SIM) motif. Positions 305–311 (EVEIVTV) match the SUMO interaction motif 2 (SIM) motif. Disordered stretches follow at residues 318–346 (RTTL…RNRV), 364–452 (TVDE…MPRL), and 485–509 (HFPH…SFRD). Positions 328-337 (WGQNTQSGRT) are enriched in polar residues. Positions 360–364 (VVDLT) match the SUMO interaction motif 3 (SIM) motif. Low complexity predominate over residues 385–395 (VSTVSSNTSTS). Residues 485–496 (HFPHHHHHHHQS) are compositionally biased toward basic residues. The tract at residues 867 to 869 (YPH) is ubiquitin binding. Residues C902 and C905 each contribute to the Zn(2+) site. The segment at 902–943 (CTICLSILEEGEDVRRLPCMHLFHQVCVDQWLITNKKCPICR) adopts an RING-type; atypical zinc-finger fold. Residues 917 to 921 (RLPCM) are ubiquitin binding. Zn(2+)-binding residues include H925 and C928.

This sequence belongs to the Arkadia family. As to quaternary structure, monomer.

The protein resides in the nucleus. The protein localises to the cytoplasm. Its subcellular location is the PML body. It carries out the reaction S-ubiquitinyl-[E2 ubiquitin-conjugating enzyme]-L-cysteine + [acceptor protein]-L-lysine = [E2 ubiquitin-conjugating enzyme]-L-cysteine + N(6)-ubiquitinyl-[acceptor protein]-L-lysine.. It functions in the pathway protein modification; protein ubiquitination. With respect to regulation, binds free ubiquitin non-covalently via its RING-type zinc finger. Ubiquitin-binding leads to enhance the E3 ubiquitin-protein ligase activity by stabilizing the ubiquitin-conjugating enzyme E2 (donor ubiquitin) in the 'closed' conformation and activating ubiquitin transfer. Functionally, E3 ubiquitin-protein ligase required for mesoderm patterning during embryonic development. Acts as an enhancer of the transcriptional responses of the smad2/smad3 effectors, which are activated downstream of BMP. Acts by mediating ubiquitination and degradation of SMAD inhibitors such as smad7, inducing their proteasomal degradation and thereby enhancing the transcriptional activity of TGF-beta and BMP. Specifically binds polysumoylated chains via SUMO interaction motifs (SIMs) and mediates ubiquitination of sumoylated substrates. The regulation of the BMP-SMAD signaling is however independent of sumoylation and is not dependent of SUMO interaction motifs (SIMs). The chain is E3 ubiquitin-protein ligase arkadia (rnf111) from Xenopus tropicalis (Western clawed frog).